The chain runs to 268 residues: Protein limb expression 1 homolog (268 aa).

It belongs to the LIX1 family. Interacts with ft (via intracellular domain) and ds (via intracellular domain).

The protein resides in the apical cell membrane. It localises to the cytoplasm. Functionally, component of the Fat (ft) signaling pathway that functions in normal development of various organs such as the wing and leg. In developing imaginal disks, involved in regulating both the protein levels and apical localization of ft and ds. Involved in establishing planar cell polarity (PCP) along the anterior-posterior axis of the wing (the early Fz signaling event), probably by acting upstream of ds and ft to regulate Fz activity. This chain is Protein limb expression 1 homolog, found in Drosophila melanogaster (Fruit fly).